The primary structure comprises 371 residues: DNA replication and repair protein RecF (371 aa).

30–37 (GENAQGKT) is a binding site for ATP.

The protein belongs to the RecF family.

Its subcellular location is the cytoplasm. Functionally, the RecF protein is involved in DNA metabolism; it is required for DNA replication and normal SOS inducibility. RecF binds preferentially to single-stranded, linear DNA. It also seems to bind ATP. This Lysinibacillus sphaericus (strain C3-41) protein is DNA replication and repair protein RecF.